Here is a 174-residue protein sequence, read N- to C-terminus: Protein GrpE (174 aa).

Residues 1–35 (MAQDIKNEEVEEVQEEEVVETAEETTPEKSELDLA) form a disordered region. The segment covering 9–25 (EVEEVQEEEVVETAEET) has biased composition (acidic residues). The segment covering 26–35 (TPEKSELDLA) has biased composition (basic and acidic residues).

Belongs to the GrpE family. As to quaternary structure, homodimer.

It localises to the cytoplasm. Its function is as follows. Participates actively in the response to hyperosmotic and heat shock by preventing the aggregation of stress-denatured proteins, in association with DnaK and GrpE. It is the nucleotide exchange factor for DnaK and may function as a thermosensor. Unfolded proteins bind initially to DnaJ; upon interaction with the DnaJ-bound protein, DnaK hydrolyzes its bound ATP, resulting in the formation of a stable complex. GrpE releases ADP from DnaK; ATP binding to DnaK triggers the release of the substrate protein, thus completing the reaction cycle. Several rounds of ATP-dependent interactions between DnaJ, DnaK and GrpE are required for fully efficient folding. This chain is Protein GrpE, found in Streptococcus pneumoniae (strain ATCC BAA-255 / R6).